A 437-amino-acid chain; its full sequence is UDP-N-acetylmuramate--L-alanine ligase (437 aa).

Residue 108-114 participates in ATP binding; sequence GAHGKTS.

The protein belongs to the MurCDEF family.

The protein resides in the cytoplasm. It catalyses the reaction UDP-N-acetyl-alpha-D-muramate + L-alanine + ATP = UDP-N-acetyl-alpha-D-muramoyl-L-alanine + ADP + phosphate + H(+). Its pathway is cell wall biogenesis; peptidoglycan biosynthesis. Cell wall formation. The polypeptide is UDP-N-acetylmuramate--L-alanine ligase (Staphylococcus aureus (strain COL)).